The following is a 954-amino-acid chain: uncharacterized protein (954 aa).

An N-terminal signal peptide occupies residues 1–35; sequence MKILFNNTFELFCLFVFVTWALFLNNNGILYPVHC. Positions 381 to 415 form a coiled coil; that stretch reads KNKISSARDDIQKDINKMESELINVSNEINRLDIV. The disordered stretch occupies residues 733-765; the sequence is NIRNDNNNNNNNNNNNSNNNNNNNNNNKDNSVA. Residues 736 to 763 show a composition bias toward low complexity; sequence NDNNNNNNNNNNNSNNNNNNNNNNKDNS.

This is an uncharacterized protein from Plasmodium falciparum (isolate 3D7).